The following is a 239-amino-acid chain: Fibroblast growth factor 3 (239 aa).

Positions 1-17 (MGLIWLLLLSLLEPGWP) are cleaved as a signal peptide. A glycan (N-linked (GlcNAc...) asparagine) is linked at asparagine 65. The interval 193–239 (QLQSGLPRPPGKGVQPRRRRQKQSPDNLEPSHVQASRLGSQLEASAH) is disordered. Over residues 225–239 (VQASRLGSQLEASAH) the composition is skewed to polar residues.

It belongs to the heparin-binding growth factors family. Interacts with FGFR1 and FGFR2. Affinity between fibroblast growth factors (FGFs) and their receptors is increased by heparan sulfate glycosaminoglycans that function as coreceptors.

It localises to the secreted. Its function is as follows. Plays an important role in the regulation of embryonic development, cell proliferation, and cell differentiation. Required for normal ear development. In Homo sapiens (Human), this protein is Fibroblast growth factor 3 (FGF3).